Reading from the N-terminus, the 198-residue chain is Glycerol-3-phosphate acyltransferase (198 aa).

Transmembrane regions (helical) follow at residues 6-26 (FLPV…GLVL), 56-78 (LAAG…AGYI), 83-101 (AAMA…PVWL), 113-133 (IGIL…LWLA), and 155-175 (FLWW…TLLL).

It belongs to the PlsY family. As to quaternary structure, probably interacts with PlsX.

It is found in the cell inner membrane. It catalyses the reaction an acyl phosphate + sn-glycerol 3-phosphate = a 1-acyl-sn-glycero-3-phosphate + phosphate. It functions in the pathway lipid metabolism; phospholipid metabolism. Catalyzes the transfer of an acyl group from acyl-phosphate (acyl-PO(4)) to glycerol-3-phosphate (G3P) to form lysophosphatidic acid (LPA). This enzyme utilizes acyl-phosphate as fatty acyl donor, but not acyl-CoA or acyl-ACP. This chain is Glycerol-3-phosphate acyltransferase, found in Bradyrhizobium diazoefficiens (strain JCM 10833 / BCRC 13528 / IAM 13628 / NBRC 14792 / USDA 110).